A 340-amino-acid chain; its full sequence is KH domain-containing RNA-binding protein QKI (340 aa).

The 67-residue stretch at 87–153 (YVPVKEYPDF…WEHLNEDLHV (67 aa)) folds into the KH domain. The SH3-binding signature appears at 275–278 (PPGP). Positions 323 to 329 (RVHPYQR) match the Nuclear localization signal motif.

Belongs to the quaking family. As to quaternary structure, homodimer; does not require RNA to homodimerize.

The protein resides in the cytoplasm. It is found in the nucleus. Its function is as follows. RNA reader protein, which recognizes and binds specific RNAs, thereby regulating RNA metabolic processes, such as pre-mRNA splicing, circular RNA (circRNA) formation, mRNA export, mRNA stability and/or translation. Involved in various cellular processes, such as mRNA storage into stress granules, apoptosis, interferon response, glial cell fate and development. Binds to the 5'-NACUAAY-N(1,20)-UAAY-3' RNA core sequence. Acts as a mRNA modification reader that specifically recognizes and binds mRNA transcripts modified by internal N(7)-methylguanine (m7G). Promotes the formation of circular RNAs (circRNAs): acts by binding to sites flanking circRNA-forming exons. CircRNAs are produced by back-splicing circularization of pre-mRNAs. Required to protect and promote stability of mRNAs which promotes oligodendrocyte differentiation. Acts as an important regulator of muscle development. The polypeptide is KH domain-containing RNA-binding protein QKI (Gallus gallus (Chicken)).